The following is a 683-amino-acid chain: Amphiphysin (683 aa).

Coiled-coil stretches lie at residues 10–83 and 144–191; these read AKNV…SLHE and DYDS…QEEL. Residues 24–240 enclose the BAR domain; it reads VLQKLGKADE…MTKLGDQHAD (217 aa). Disordered stretches follow at residues 244–311, 421–443, and 455–599; these read SIQG…KVTP, AETE…AAAP, and EPKE…ASLS. Serine 252 bears the Phosphoserine mark. A Phosphothreonine modification is found at threonine 260. The span at 261 to 274 shows a compositional bias: pro residues; sequence PSPPEEASPLPSPT. 4 positions are modified to phosphoserine: serine 262, serine 268, serine 272, and serine 276. Position 280 is a phosphothreonine (threonine 280). 2 stretches are compositionally biased toward low complexity: residues 424–443 and 468–477; these read EQAL…AAAP and AGETVGTEGS. Residue serine 496 is modified to Phosphoserine. Over residues 539-559 the composition is skewed to basic and acidic residues; the sequence is SNHEGEEHQETTTGTETREAT. The segment covering 585 to 596 has biased composition (low complexity); that stretch reads AATPAPAGAVDA. In terms of domain architecture, SH3 spans 610–683; it reads GFLYKVETLH…FPENFTRHLE (74 aa). At serine 626 the chain carries Phosphoserine.

As to quaternary structure, heterodimer with BIN1. Binds SH3GLB1. Interacts with REPS1 and SGIP1. Binds AP2A2. Interacts with AP2B1. Interacts with DNM1 and SYNJ1.

Its subcellular location is the cytoplasmic vesicle. It localises to the secretory vesicle. It is found in the synaptic vesicle membrane. The protein resides in the cytoplasm. The protein localises to the cytoskeleton. May participate in mechanisms of regulated exocytosis in synapses and certain endocrine cell types. May control the properties of the membrane associated cytoskeleton. The protein is Amphiphysin (Amph) of Rattus norvegicus (Rat).